Reading from the N-terminus, the 97-residue chain is U-reduvitoxin-Pr10a (97 aa).

The N-terminal stretch at 1–18 (MKTALFLVFALAFIAVEG) is a signal peptide. Pacifastin domains lie at 22 to 59 (KACS…CPPR) and 62 to 97 (KQSC…RLCW). 3 disulfide bridges follow: cysteine 24–cysteine 42, cysteine 37–cysteine 56, and cysteine 40–cysteine 51. Positions 57-59 (PPR) are pro-Pro-Arg motif necessary for proteolytic processing. 3 cysteine pairs are disulfide-bonded: cysteine 65–cysteine 82, cysteine 77–cysteine 96, and cysteine 80–cysteine 91.

The protein belongs to the protease inhibitor I19 family. As to expression, expressed by the venom gland.

It is found in the secreted. Its function is as follows. Inhibits trypsin activity and prophenoloxidase (PPO) activation, an enzyme essential for both clotting and insect innate immune responses. It does not inhibit activity of chymotrypsin and protease K, and has no effect on phenoloxidase (PO) activity. In Platymeris rhadamanthus (Red spot assassin bug), this protein is U-reduvitoxin-Pr10a.